Consider the following 286-residue polypeptide: 4-hydroxybenzoate octaprenyltransferase (286 aa).

Transmembrane regions (helical) follow at residues 21 to 40 (GTLLLLWPCLMALMLAAGGM), 95 to 115 (ILFVILGLSAFGLVLLLNGLV), 142 to 162 (FLGIVWSWSIPMAYAAQTGEV), 167 to 187 (WWLFAANWCWTVAYDTMYAMV), 210 to 230 (QIIGLFQLAALACFIAAGWSA), 235 to 255 (LYGLGILTFVGFSTYQQMLIF), and 266 to 286 (FLNNNWAGLALFVGLGADYLI).

This sequence belongs to the UbiA prenyltransferase family. It depends on Mg(2+) as a cofactor.

It localises to the cell inner membrane. The enzyme catalyses all-trans-octaprenyl diphosphate + 4-hydroxybenzoate = 4-hydroxy-3-(all-trans-octaprenyl)benzoate + diphosphate. The protein operates within cofactor biosynthesis; ubiquinone biosynthesis. Functionally, catalyzes the prenylation of para-hydroxybenzoate (PHB) with an all-trans polyprenyl group. Mediates the second step in the final reaction sequence of ubiquinone-8 (UQ-8) biosynthesis, which is the condensation of the polyisoprenoid side chain with PHB, generating the first membrane-bound Q intermediate 3-octaprenyl-4-hydroxybenzoate. This chain is 4-hydroxybenzoate octaprenyltransferase, found in Shewanella baltica (strain OS185).